Reading from the N-terminus, the 416-residue chain is Transcription factor LATE FLOWERING (416 aa).

Composition is skewed to low complexity over residues 176 to 186 and 200 to 212; these read STTTTTTALPP and TSPT…TSET. Disordered stretches follow at residues 176–226 and 276–311; these read STTT…AGGS and LGGP…QTVA. A basic motif; degenerate region spans residues 303 to 316; it reads ISSDPQTVAARLRR. Residues 303–352 form the bHLH domain; it reads ISSDPQTVAARLRRERVSERLRVLQRLVPGGSKMDTATMLDEAASYLKFL. A helix-loop-helix motif region spans residues 317-352; that stretch reads ERVSERLRVLQRLVPGGSKMDTATMLDEAASYLKFL.

This sequence belongs to the bHLH protein family. As to quaternary structure, interacts with PIL13 and PIL15.

Its subcellular location is the nucleus. Transcription factor involved in the negative regulation of flowering. May be involved in the repression of the flowering factor GI and HD1 by interacting with PIL13 and PIL15 and competing with PRR1. Possesses transactivation activity in yeast. The sequence is that of Transcription factor LATE FLOWERING from Oryza sativa subsp. japonica (Rice).